The following is a 296-amino-acid chain: MIIHPNFDPVAIHLGPLAVRWYGLMYLVGFILAIVVGRLRLKLPHVAAQGWSAKDIDDMMFYGVLGVVLGGRLGYVLFYKADYYFSHPLDIFRVWEGGMSFHGGFLGVTLAMALFAWQRKRHWLEVTDFVAPMVPTGLAAGRLGNFINGELWGRVTSPDAPWAMLFPGASRDDAAWLAAHQDIAAKWNLNEVFLAHQMLPRHPSQLYEIALEGIALFFVLWFFSRKPRPMGAISALFLIGYGAARFTVEFAREPDDFLGLLTFGLSMGQWLSLPMIVAGVLMMIWAYRRGGAAKAA.

Transmembrane regions (helical) follow at residues 17–37 (LAVRWYGLMYLVGFILAIVVG), 59–79 (MMFYGVLGVVLGGRLGYVLFY), and 97–117 (GGMSFHGGFLGVTLAMALFAW). Position 142 (Arg142) interacts with a 1,2-diacyl-sn-glycero-3-phospho-(1'-sn-glycerol). The next 2 membrane-spanning stretches (helical) occupy residues 230 to 250 (MGAISALFLIGYGAARFTVEF) and 265 to 285 (LSMGQWLSLPMIVAGVLMMIW).

This sequence belongs to the Lgt family.

The protein localises to the cell inner membrane. It carries out the reaction L-cysteinyl-[prolipoprotein] + a 1,2-diacyl-sn-glycero-3-phospho-(1'-sn-glycerol) = an S-1,2-diacyl-sn-glyceryl-L-cysteinyl-[prolipoprotein] + sn-glycerol 1-phosphate + H(+). Its pathway is protein modification; lipoprotein biosynthesis (diacylglyceryl transfer). In terms of biological role, catalyzes the transfer of the diacylglyceryl group from phosphatidylglycerol to the sulfhydryl group of the N-terminal cysteine of a prolipoprotein, the first step in the formation of mature lipoproteins. In Burkholderia thailandensis (strain ATCC 700388 / DSM 13276 / CCUG 48851 / CIP 106301 / E264), this protein is Phosphatidylglycerol--prolipoprotein diacylglyceryl transferase.